The primary structure comprises 197 residues: MIIGLTGGIASGKSTVVEIIKDAGYKVIDADQLVHDMQVKGGRLYQALLDWLGDGILLPNGELNRPKLGQLIFSSEEMRYQSAEIQGKIIREELAAKRDCLAKEEDVFFMDIPLLFENDYQDWFDQIWLVAVSPQVQGQRLMKRNHLSAEEAGMRIASQMPLAEKLPYASLVIDNNGNIDDLKKKVKGAIKDLANLV.

The region spanning 2–197 (IIGLTGGIAS…GAIKDLANLV (196 aa)) is the DPCK domain. 10–15 (ASGKST) contacts ATP.

Belongs to the CoaE family.

The protein localises to the cytoplasm. It carries out the reaction 3'-dephospho-CoA + ATP = ADP + CoA + H(+). It participates in cofactor biosynthesis; coenzyme A biosynthesis; CoA from (R)-pantothenate: step 5/5. Its function is as follows. Catalyzes the phosphorylation of the 3'-hydroxyl group of dephosphocoenzyme A to form coenzyme A. This is Dephospho-CoA kinase from Streptococcus thermophilus (strain ATCC BAA-250 / LMG 18311).